A 2334-amino-acid polypeptide reads, in one-letter code: Centriolin (2334 aa).

Residues 1–70 form a disordered region; it reads MKKGSERRLS…ESTVPLEPQQ (70 aa). The span at 21–38 shows a compositional bias: low complexity; sequence PGPSSLRSSMRSRSLSPL. LRR repeat units follow at residues 126–147, 148–169, 170–191, and 194–215; these read KLEV…DKLL, RLRE…ENMC, NLQK…FAKK, and SLRV…SKLK. In terms of domain architecture, LRRCT spans 228-266; that stretch reads NPVVALPHYLQFIIFHLRSLESLEGQPVTTQDRQEAFER. Coiled coils occupy residues 265-343 and 437-800; these read ERFS…VELT and DLQL…LNHV. Disordered stretches follow at residues 542–562 and 751–771; these read DSLD…RGKE and SLRD…ENNE. At Ser832 the chain carries Phosphoserine. A coiled-coil region spans residues 858-1102; that stretch reads EKEEAQVRER…ITRLRDVLNL (245 aa). Disordered regions lie at residues 1154-1198, 1213-1245, and 1338-1360; these read SKVS…PLPA, KSFS…VPPP, and LKSK…EEVD. The segment covering 1227–1238 has biased composition (acidic residues); sequence SQEESGLDDQEE. Residues 1320–2169 are a coiled coil; sequence EHHNLENEVS…MRTLKSEVKD (850 aa). Phosphoserine is present on Ser1478. Residues 1951–2121 form a required for centrosome localization region; sequence MMFQKLQKER…ELVAQDNHER (171 aa). The tract at residues 1988–2334 is sufficient for interaction with HOOK2; that stretch reads QKSRLKQLLT…PLEEPNSYRH (347 aa). The span at 2291–2307 shows a compositional bias: low complexity; that stretch reads TSTSTDSASSPSLPSLV. A disordered region spans residues 2291–2334; the sequence is TSTSTDSASSPSLPSLVEDSQHGHSQSSFQVLQVPLEEPNSYRH.

In terms of assembly, interacts with HOOK2. Interacts with EXOC6 and SNAPIN. Associates with the exocyst complex. In terms of tissue distribution, highly expressed in liver.

The protein localises to the cytoplasm. Its subcellular location is the cytoskeleton. It localises to the microtubule organizing center. The protein resides in the centrosome. It is found in the midbody. The protein localises to the midbody ring. In terms of biological role, involved in cell cycle progression and cytokinesis. During the late steps of cytokinesis, anchors exocyst and SNARE complexes at the midbody, thereby allowing secretory vesicle-mediated abscission. The polypeptide is Centriolin (Cntrl) (Mus musculus (Mouse)).